The sequence spans 267 residues: Thiamine pyrophosphokinase 3 (267 aa).

This sequence belongs to the thiamine pyrophosphokinase family.

The protein resides in the cytoplasm. Its subcellular location is the cytosol. The catalysed reaction is thiamine + ATP = thiamine diphosphate + AMP + H(+). It participates in cofactor biosynthesis; thiamine diphosphate biosynthesis; thiamine diphosphate from thiamine: step 1/1. In terms of biological role, catalyzes the phosphorylation of thiamine to thiamine pyrophosphate (TPP). TPP is an active cofactor for enzymes involved in glycolysis and energy production. Plant leaves require high levels of TPP for photosynthesis and carbohydrate metabolism. The protein is Thiamine pyrophosphokinase 3 (TPK3) of Oryza sativa subsp. japonica (Rice).